A 540-amino-acid polypeptide reads, in one-letter code: Zinc finger protein 768 (540 aa).

2 disordered regions span residues 1–166 and 239–258; these read MERE…FEAQ and TGALRGPGRRGGRARGGQGP. Residues serine 17, serine 18, and serine 23 each carry the phosphoserine modification. Phosphotyrosine is present on tyrosine 27. Position 33 is a phosphoserine (serine 33). The segment covering 34–53 has biased composition (acidic residues); sequence ENEEEEISQQEGSGDYEVEE. Serine 62, serine 69, serine 76, serine 83, serine 90, serine 97, serine 104, serine 107, serine 111, serine 118, and serine 125 each carry phosphoserine. Low complexity predominate over residues 62–77; it reads SPGFEPQSPEFEPQSP. Polar residues predominate over residues 107 to 119; it reads SDSQSPEFESQSP. A Phosphotyrosine modification is found at tyrosine 128. Serine 132 carries the post-translational modification Phosphoserine. Tyrosine 135 carries the phosphotyrosine modification. A Phosphoserine modification is found at serine 139. Phosphotyrosine is present on tyrosine 142. A phosphoserine mark is found at serine 144 and serine 147. The span at 149–166 shows a compositional bias: polar residues; sequence YESQNTELKTQSPEFEAQ. At threonine 158 the chain carries Phosphothreonine. A Phosphoserine modification is found at serine 160. Residues 261 to 283 form a C2H2-type 1 zinc finger; the sequence is NICGICGKSFGRGSTLIQHQRIH. At threonine 284 the chain carries Phosphothreonine. Phosphotyrosine is present on tyrosine 289. C2H2-type zinc fingers lie at residues 289–311, 317–339, 345–367, and 373–395; these read YKCEVCSKAFSQSSDLIKHQRTH, YKCPRCGKAFADSSYLLRHQRTH, YKCPHCGKAFGDSSYLLRHQRTH, and YSCTECGKCYSQNSSLRSHQRVH. Serine 295 and serine 299 each carry phosphoserine. Threonine 396 is subject to Phosphothreonine. C2H2-type zinc fingers lie at residues 401–423, 429–451, 457–479, 485–507, and 513–535; these read FSCGICGKSFSQRSALIPHARSH, FKCPECGKRFGQSSVLAIHARTH, YSCPDCGKTFNRSSTLIQHQRSH, YRCAVCGKGFCRSSTLLQHHRVH, and YKCDDCGKAFSQSSDLIRHQRTH. Serine 442 carries the post-translational modification Phosphoserine.

It belongs to the krueppel C2H2-type zinc-finger protein family. As to quaternary structure, interacts (via zinc-finger domains) with TP53 (via N-terminus); interaction might be facilitated by TP53 oligomerization state. Interacts with ELP3. In terms of processing, may be phosphorylated at residue 'Ser-5' of the tandem heptapeptide repeats in the N-terminus. Phosphorylation might be increased upon RAS pathway activation and negatively regulate protein stability.

Its subcellular location is the nucleus. The protein resides in the chromosome. Its function is as follows. Binds to mammalian-wide interspersed repeat (MIRs) sequences in euchromatin and promoter regions of genes at the consensus sequence 5'-GCTGTGTG-[N20]-CCTCTCTG-3', consisting of two anchor regions connected by a linker region; the linker region probably does not contribute to the binding specificity. Required for cell homeostasis. May be involved in transcriptional regulation. The protein is Zinc finger protein 768 (ZNF768) of Homo sapiens (Human).